The primary structure comprises 450 residues: Chromosomal replication initiator protein DnaA (450 aa).

The interval 1-71 is domain I, interacts with DnaA modulators; the sequence is MEDVWLQAQS…SVRSLTDSHF (71 aa). Residues 71 to 113 are domain II; sequence FQVELQVAARQQEKTAKSPRKSHTEDELGPVESEKCAPAEFST. A disordered region spans residues 82–103; the sequence is QEKTAKSPRKSHTEDELGPVES. The domain III, AAA+ region stretch occupies residues 114 to 330; it reads NLNAKYTFDT…GMLIRLGAVA (217 aa). ATP contacts are provided by Gly-158, Gly-160, Lys-161, and Thr-162. Residues 331–450 are domain IV, binds dsDNA; that stretch reads SLTGKNITLD…IETLRKGLLN (120 aa).

This sequence belongs to the DnaA family. As to quaternary structure, oligomerizes as a right-handed, spiral filament on DNA at oriC.

It is found in the cytoplasm. In terms of biological role, plays an essential role in the initiation and regulation of chromosomal replication. ATP-DnaA binds to the origin of replication (oriC) to initiate formation of the DNA replication initiation complex once per cell cycle. Binds the DnaA box (a 9 base pair repeat at the origin) and separates the double-stranded (ds)DNA. Forms a right-handed helical filament on oriC DNA; dsDNA binds to the exterior of the filament while single-stranded (ss)DNA is stabiized in the filament's interior. The ATP-DnaA-oriC complex binds and stabilizes one strand of the AT-rich DNA unwinding element (DUE), permitting loading of DNA polymerase. After initiation quickly degrades to an ADP-DnaA complex that is not apt for DNA replication. Binds acidic phospholipids. This is Chromosomal replication initiator protein DnaA from Geobacter metallireducens (strain ATCC 53774 / DSM 7210 / GS-15).